The primary structure comprises 967 residues: Aminopeptidase N (967 aa).

The Cytoplasmic portion of the chain corresponds to 1–8 (MAKGFYIS). Residues 9-32 (KPVGILAILLGVAAVCTIIALSVV) form a helical; Signal-anchor for type II membrane protein membrane-spanning segment. The interval 33 to 66 (YSQEKNRSTESSTAASTAAPTGPTTTVATTLDQS) is cytosolic Ser/Thr-rich junction. Residues 33-967 (YSQEKNRSTE…VVLRWFTENS (935 aa)) lie on the Extracellular side of the membrane. Asparagine 38 carries N-linked (GlcNAc...) asparagine glycosylation. Residues 41–61 (TESSTAASTAAPTGPTTTVAT) form a disordered region. A metalloprotease region spans residues 67-967 (KPWNVYRLPK…VVLRWFTENS (901 aa)). Residues asparagine 84 and asparagine 126 are each glycosylated (N-linked (GlcNAc...) asparagine). Tyrosine 175 carries the sulfotyrosine modification. Residues asparagine 233 and asparagine 338 are each glycosylated (N-linked (GlcNAc...) asparagine). 351-355 (GAMEN) is a binding site for substrate. Histidine 387 lines the Zn(2+) pocket. The active-site Proton acceptor is the glutamate 388. 2 residues coordinate Zn(2+): histidine 391 and glutamate 410. At tyrosine 418 the chain carries Sulfotyrosine. N-linked (GlcNAc...) asparagine glycosylation is found at asparagine 626, asparagine 682, and asparagine 740. The segment at 670-840 (ASAQKVPVTL…GALACSNQVW (171 aa)) is interaction with FCoV and TGEV spike glycoprotein. Intrachain disulfides connect cysteine 762-cysteine 769 and cysteine 799-cysteine 835.

This sequence belongs to the peptidase M1 family. Homodimer. Interacts with SLC6A19. In terms of assembly, (Microbial infection) Interacts with FCoV, CCoV, TGEV and HCoV-229E spike glycoprotein. Zn(2+) serves as cofactor. In terms of processing, sulfated. Post-translationally, N- and O-glycosylated. May undergo proteolysis and give rise to a soluble form.

It is found in the cell membrane. It carries out the reaction Release of an N-terminal amino acid, Xaa-|-Yaa- from a peptide, amide or arylamide. Xaa is preferably Ala, but may be most amino acids including Pro (slow action). When a terminal hydrophobic residue is followed by a prolyl residue, the two may be released as an intact Xaa-Pro dipeptide.. Functionally, broad specificity aminopeptidase which plays a role in the final digestion of peptides generated from hydrolysis of proteins by gastric and pancreatic proteases. Also involved in the processing of various peptides including peptide hormones, such as angiotensin III and IV, neuropeptides, and chemokines. May also be involved the cleavage of peptides bound to major histocompatibility complex class II molecules of antigen presenting cells. May have a role in angiogenesis and promote cholesterol crystallization. May have a role in amino acid transport by acting as binding partner of amino acid transporter SLC6A19 and regulating its activity. Its function is as follows. (Microbial infection) In case of feline coronavirus (FCoV) infection, serves as a receptor for FCoV spike glycoprotein. It is as well a receptor for other serogroup I coronaviruses, like canine coronavirus (CCoV), porcine transmissible gastroenteritis virus (TGEV), and human coronavirus 229E (HCoV-229E). Also serves as a receptor for infectious bronchitis virus (IBV, Arkansas 99 serotype) in serogroup III. This is Aminopeptidase N (ANPEP) from Felis catus (Cat).